A 133-amino-acid polypeptide reads, in one-letter code: Ribosome-binding factor A (133 aa).

This sequence belongs to the RbfA family. Monomer. Binds 30S ribosomal subunits, but not 50S ribosomal subunits or 70S ribosomes.

It is found in the cytoplasm. Functionally, one of several proteins that assist in the late maturation steps of the functional core of the 30S ribosomal subunit. Associates with free 30S ribosomal subunits (but not with 30S subunits that are part of 70S ribosomes or polysomes). Required for efficient processing of 16S rRNA. May interact with the 5'-terminal helix region of 16S rRNA. In Bordetella bronchiseptica (strain ATCC BAA-588 / NCTC 13252 / RB50) (Alcaligenes bronchisepticus), this protein is Ribosome-binding factor A.